The sequence spans 183 residues: Nucleoplasmin-like protein NO29 (183 aa).

Over residues 126-166 (SDDEDLSGSEEEMEDEEEEEDDDDDDDDDDDDDDDDDEEEI) the composition is skewed to acidic residues. Residues 126 to 183 (SDDEDLSGSEEEMEDEEEEEDDDDDDDDDDDDDDDDDEEEITPIKPAKKPLKTLSRTF) are disordered.

It belongs to the nucleoplasmin family.

Its subcellular location is the nucleus. It localises to the nucleolus. In Xenopus laevis (African clawed frog), this protein is Nucleoplasmin-like protein NO29.